Consider the following 566-residue polypeptide: Arginine--tRNA ligase (566 aa).

The 'HIGH' region motif lies at 121-131 (ANPNGPFHIGH).

It belongs to the class-I aminoacyl-tRNA synthetase family.

Its subcellular location is the cytoplasm. The catalysed reaction is tRNA(Arg) + L-arginine + ATP = L-arginyl-tRNA(Arg) + AMP + diphosphate. This is Arginine--tRNA ligase from Methanococcus maripaludis (strain C6 / ATCC BAA-1332).